The chain runs to 1224 residues: DNA-directed RNA polymerase subunit beta'' (1224 aa).

4 residues coordinate Zn(2+): cysteine 233, cysteine 308, cysteine 315, and cysteine 318.

Belongs to the RNA polymerase beta' chain family. RpoC2 subfamily. As to quaternary structure, in plastids the minimal PEP RNA polymerase catalytic core is composed of four subunits: alpha, beta, beta', and beta''. When a (nuclear-encoded) sigma factor is associated with the core the holoenzyme is formed, which can initiate transcription. The cofactor is Zn(2+).

It localises to the plastid. Its subcellular location is the chloroplast. The enzyme catalyses RNA(n) + a ribonucleoside 5'-triphosphate = RNA(n+1) + diphosphate. Functionally, DNA-dependent RNA polymerase catalyzes the transcription of DNA into RNA using the four ribonucleoside triphosphates as substrates. This Pinus thunbergii (Japanese black pine) protein is DNA-directed RNA polymerase subunit beta''.